Here is a 165-residue protein sequence, read N- to C-terminus: Endoribonuclease YbeY (165 aa).

H131, H135, and H141 together coordinate Zn(2+).

This sequence belongs to the endoribonuclease YbeY family. Zn(2+) serves as cofactor.

It localises to the cytoplasm. Single strand-specific metallo-endoribonuclease involved in late-stage 70S ribosome quality control and in maturation of the 3' terminus of the 16S rRNA. The sequence is that of Endoribonuclease YbeY from Agathobacter rectalis (strain ATCC 33656 / DSM 3377 / JCM 17463 / KCTC 5835 / VPI 0990) (Eubacterium rectale).